The sequence spans 222 residues: Probable fructose-6-phosphate aldolase (222 aa).

Residue K87 is the Schiff-base intermediate with substrate of the active site.

Belongs to the transaldolase family. Type 3A subfamily.

It is found in the cytoplasm. It carries out the reaction beta-D-fructose 6-phosphate = dihydroxyacetone + D-glyceraldehyde 3-phosphate. In terms of biological role, catalyzes the reversible formation of fructose 6-phosphate from dihydroxyacetone and D-glyceraldehyde 3-phosphate via an aldolization reaction. The polypeptide is Probable fructose-6-phosphate aldolase (Streptococcus pneumoniae (strain ATCC 700669 / Spain 23F-1)).